The sequence spans 198 residues: Recombination protein RecR (198 aa).

A C4-type zinc finger spans residues 58–73; sequence CSVCGNFTDTDPCAIC. The region spanning 81–175 is the Toprim domain; that stretch reads DIICVVEQPK…KVTRIAAGIP (95 aa).

It belongs to the RecR family.

In terms of biological role, may play a role in DNA repair. It seems to be involved in an RecBC-independent recombinational process of DNA repair. It may act with RecF and RecO. This Clostridium perfringens (strain ATCC 13124 / DSM 756 / JCM 1290 / NCIMB 6125 / NCTC 8237 / Type A) protein is Recombination protein RecR.